A 254-amino-acid polypeptide reads, in one-letter code: Probable pectate lyase E (254 aa).

Residues Met1–Ala17 form the signal peptide. N-linked (GlcNAc...) asparagine glycosylation is present at Asn175. Residues Thr227–Cys254 form a disordered region.

The protein belongs to the polysaccharide lyase 3 family. Ca(2+) serves as cofactor.

The protein resides in the secreted. The catalysed reaction is Eliminative cleavage of (1-&gt;4)-alpha-D-galacturonan to give oligosaccharides with 4-deoxy-alpha-D-galact-4-enuronosyl groups at their non-reducing ends.. Pectinolytic enzyme consist of four classes of enzymes: pectin lyase, polygalacturonase, pectin methylesterase and rhamnogalacturonase. Among pectinolytic enzymes, pectin lyase is the most important in depolymerization of pectin, since it cleaves internal glycosidic bonds of highly methylated pectins. Favors pectate, the anion, over pectin, the methyl ester. This chain is Probable pectate lyase E (plyE), found in Neosartorya fischeri (strain ATCC 1020 / DSM 3700 / CBS 544.65 / FGSC A1164 / JCM 1740 / NRRL 181 / WB 181) (Aspergillus fischerianus).